The sequence spans 448 residues: Late embryogenesis abundant protein ECP63 (448 aa).

Basic and acidic residues-rich tracts occupy residues 282–326 (TEEA…EEAG) and 334–354 (QKTRESTESGAQKAEETKDSA). Disordered stretches follow at residues 282-360 (TEEA…RGNE) and 411-448 (SKPGKVATSLKASDQMTGQTFNDVGRMDDDARKDKGKL). A coiled-coil region spans residues 297 to 331 (KENMEKAGEVTRQKMEEMRLEGKELKEEAGAKAQE). Polar residues predominate over residues 420–432 (LKASDQMTGQTFN). The segment covering 435 to 448 (GRMDDDARKDKGKL) has biased composition (basic and acidic residues).

This sequence belongs to the LEA type 4 family. In terms of tissue distribution, expressed in mature seeds.

In terms of biological role, may be involved in the BHLH109-mediated regulation of somatic embryogenesis. The sequence is that of Late embryogenesis abundant protein ECP63 from Arabidopsis thaliana (Mouse-ear cress).